Consider the following 40-residue polypeptide: Photosystem II reaction center protein J (40 aa).

The chain crosses the membrane as a helical span at residues 8–28; it reads IPLCLIGTVAGIAVIGLVGVF.

The protein belongs to the PsbJ family. PSII is composed of 1 copy each of membrane proteins PsbA, PsbB, PsbC, PsbD, PsbE, PsbF, PsbH, PsbI, PsbJ, PsbK, PsbL, PsbM, PsbT, PsbX, PsbY, PsbZ, Psb30/Ycf12, at least 3 peripheral proteins of the oxygen-evolving complex and a large number of cofactors. It forms dimeric complexes.

It is found in the plastid. The protein localises to the chloroplast thylakoid membrane. Functionally, one of the components of the core complex of photosystem II (PSII). PSII is a light-driven water:plastoquinone oxidoreductase that uses light energy to abstract electrons from H(2)O, generating O(2) and a proton gradient subsequently used for ATP formation. It consists of a core antenna complex that captures photons, and an electron transfer chain that converts photonic excitation into a charge separation. The sequence is that of Photosystem II reaction center protein J from Triticum aestivum (Wheat).